We begin with the raw amino-acid sequence, 36 residues long: Beta/delta/mu-theraphotoxin-Pv1 (36 aa).

Cystine bridges form between cysteine 3–cysteine 17, cysteine 10–cysteine 22, and cysteine 16–cysteine 30. At phenylalanine 36 the chain carries Phenylalanine amide.

This sequence belongs to the neurotoxin 10 (Hwtx-1) family. In terms of tissue distribution, expressed by the venom gland.

Its subcellular location is the secreted. Gating-modifier toxin that targets voltage-gated sodium channels. Inhibits the inactivation of Nav1.7/SCN9A. This is Beta/delta/mu-theraphotoxin-Pv1 from Poecilotheria vittata (Ghost ornamental tarantula).